Here is an 82-residue protein sequence, read N- to C-terminus: uncharacterized protein (82 aa).

Positions 1–11 are enriched in basic and acidic residues; that stretch reads MKARGSRENAS. The disordered stretch occupies residues 1–25; the sequence is MKARGSRENASKRRPSQTQYDTHLR. Over residues 16–25 the composition is skewed to polar residues; that stretch reads SQTQYDTHLR.

This is an uncharacterized protein from Human cytomegalovirus (strain AD169) (HHV-5).